A 219-amino-acid chain; its full sequence is Probable GTP-binding protein EngB (219 aa).

Residues 33-217 enclose the EngB-type G domain; that stretch reads GPLEIAFAGR…RAAICETVGH (185 aa). GTP contacts are provided by residues 41–48, 68–72, 95–98, 162–165, and 196–198; these read GRSNVGKS, GRTQE, DMPG, TKTD, and TSS. Mg(2+) is bound by residues serine 48 and threonine 70.

This sequence belongs to the TRAFAC class TrmE-Era-EngA-EngB-Septin-like GTPase superfamily. EngB GTPase family. The cofactor is Mg(2+).

In terms of biological role, necessary for normal cell division and for the maintenance of normal septation. This is Probable GTP-binding protein EngB from Allorhizobium ampelinum (strain ATCC BAA-846 / DSM 112012 / S4) (Agrobacterium vitis (strain S4)).